We begin with the raw amino-acid sequence, 208 residues long: Small ribosomal subunit protein uS4 (208 aa).

One can recognise an S4 RNA-binding domain in the interval 98–178 (SRLDNVVYRM…RPKWLEYDAE (81 aa)).

The protein belongs to the universal ribosomal protein uS4 family. In terms of assembly, part of the 30S ribosomal subunit. Contacts protein S5. The interaction surface between S4 and S5 is involved in control of translational fidelity.

Functionally, one of the primary rRNA binding proteins, it binds directly to 16S rRNA where it nucleates assembly of the body of the 30S subunit. In terms of biological role, with S5 and S12 plays an important role in translational accuracy. This Acetivibrio thermocellus (strain ATCC 27405 / DSM 1237 / JCM 9322 / NBRC 103400 / NCIMB 10682 / NRRL B-4536 / VPI 7372) (Clostridium thermocellum) protein is Small ribosomal subunit protein uS4.